The following is a 62-amino-acid chain: Toxin Tst2 (62 aa).

In terms of domain architecture, LCN-type CS-alpha/beta spans 1–62; sequence KEGYAMDHEG…KVWDYATNKC (62 aa). 4 disulfide bridges follow: C11–C62, C15–C38, C23–C43, and C27–C45. C62 is subject to Cysteine amide.

In terms of tissue distribution, expressed by the venom gland.

It is found in the secreted. In terms of biological role, alpha toxins bind voltage-independently at site-3 of sodium channels (Nav) and inhibit the inactivation of the activated channels, thereby blocking neuronal transmission. Is toxic to mice. The sequence is that of Toxin Tst2 from Tityus stigmurus (Brazilian scorpion).